We begin with the raw amino-acid sequence, 235 residues long: Leucyl/phenylalanyl-tRNA--protein transferase (235 aa).

It belongs to the L/F-transferase family.

It localises to the cytoplasm. It catalyses the reaction N-terminal L-lysyl-[protein] + L-leucyl-tRNA(Leu) = N-terminal L-leucyl-L-lysyl-[protein] + tRNA(Leu) + H(+). The catalysed reaction is N-terminal L-arginyl-[protein] + L-leucyl-tRNA(Leu) = N-terminal L-leucyl-L-arginyl-[protein] + tRNA(Leu) + H(+). It carries out the reaction L-phenylalanyl-tRNA(Phe) + an N-terminal L-alpha-aminoacyl-[protein] = an N-terminal L-phenylalanyl-L-alpha-aminoacyl-[protein] + tRNA(Phe). Functions in the N-end rule pathway of protein degradation where it conjugates Leu, Phe and, less efficiently, Met from aminoacyl-tRNAs to the N-termini of proteins containing an N-terminal arginine or lysine. The sequence is that of Leucyl/phenylalanyl-tRNA--protein transferase from Azoarcus sp. (strain BH72).